Reading from the N-terminus, the 317-residue chain is Acetyl-coenzyme A carboxylase carboxyl transferase subunit alpha (317 aa).

A CoA carboxyltransferase C-terminal domain is found at 40–293 (LEKRSADALK…GDIITASLRS (254 aa)).

This sequence belongs to the AccA family. Acetyl-CoA carboxylase is a heterohexamer composed of biotin carboxyl carrier protein (AccB), biotin carboxylase (AccC) and two subunits each of ACCase subunit alpha (AccA) and ACCase subunit beta (AccD).

The protein localises to the cytoplasm. The catalysed reaction is N(6)-carboxybiotinyl-L-lysyl-[protein] + acetyl-CoA = N(6)-biotinyl-L-lysyl-[protein] + malonyl-CoA. It functions in the pathway lipid metabolism; malonyl-CoA biosynthesis; malonyl-CoA from acetyl-CoA: step 1/1. In terms of biological role, component of the acetyl coenzyme A carboxylase (ACC) complex. First, biotin carboxylase catalyzes the carboxylation of biotin on its carrier protein (BCCP) and then the CO(2) group is transferred by the carboxyltransferase to acetyl-CoA to form malonyl-CoA. The chain is Acetyl-coenzyme A carboxylase carboxyl transferase subunit alpha from Brucella anthropi (strain ATCC 49188 / DSM 6882 / CCUG 24695 / JCM 21032 / LMG 3331 / NBRC 15819 / NCTC 12168 / Alc 37) (Ochrobactrum anthropi).